A 99-amino-acid polypeptide reads, in one-letter code: Large ribosomal subunit protein uL23 (99 aa).

Belongs to the universal ribosomal protein uL23 family. In terms of assembly, part of the 50S ribosomal subunit. Contacts protein L29, and trigger factor when it is bound to the ribosome.

Its function is as follows. One of the early assembly proteins it binds 23S rRNA. One of the proteins that surrounds the polypeptide exit tunnel on the outside of the ribosome. Forms the main docking site for trigger factor binding to the ribosome. In Streptococcus suis (strain 98HAH33), this protein is Large ribosomal subunit protein uL23.